Consider the following 232-residue polypeptide: Large ribosomal subunit protein uL1 (232 aa).

It belongs to the universal ribosomal protein uL1 family. As to quaternary structure, part of the 50S ribosomal subunit.

In terms of biological role, binds directly to 23S rRNA. The L1 stalk is quite mobile in the ribosome, and is involved in E site tRNA release. Its function is as follows. Protein L1 is also a translational repressor protein, it controls the translation of the L11 operon by binding to its mRNA. The chain is Large ribosomal subunit protein uL1 from Bordetella bronchiseptica (strain ATCC BAA-588 / NCTC 13252 / RB50) (Alcaligenes bronchisepticus).